Here is an 850-residue protein sequence, read N- to C-terminus: AdoMet-dependent rRNA methyltransferase SPB1 (850 aa).

S-adenosyl-L-methionine-binding residues include Gly58, Trp60, Asp78, Asp94, and Asp119. Residue Lys159 is the Proton acceptor of the active site. Polar residues predominate over residues 273–282 (GETNEMTWTP). Disordered stretches follow at residues 273–305 (GETNEMTWTPRSIKEGEVDEEEEKEKDKEARDE), 388–414 (IDKELSELGEREKARKKRERRRRNEMK), 529–569 (GISD…RTLN), and 620–646 (AKKNGLEYSDSEDEEDDIVMETQKQDD). A compositionally biased stretch (basic and acidic residues) spans 388–400 (IDKELSELGEREK). The stretch at 397-425 (EREKARKKRERRRRNEMKQREIQRMQMNM) forms a coiled coil. The span at 401–411 (ARKKRERRRRN) shows a compositional bias: basic residues. Acidic residues-rich tracts occupy residues 537-561 (DESDGEMSADDVDMATIDDGEDEDD) and 628-638 (SDSEDEEDDIV). The stretch at 746-773 (LEAKGRKKMRALRRLEQMKKKSELINED) forms a coiled coil. A disordered region spans residues 811–850 (KNKGIAGRPRGVTGKYKMVDGTMKKEQRAIRRIKKKMGKK). Over residues 840 to 850 (IRRIKKKMGKK) the composition is skewed to basic residues.

The protein belongs to the class I-like SAM-binding methyltransferase superfamily. RNA methyltransferase RlmE family. SPB1 subfamily. In terms of assembly, component of the nucleolar and nucleoplasmic pre-60S ribosomal particle.

The protein resides in the nucleus. It is found in the nucleolus. It carries out the reaction a ribonucleotide in rRNA + S-adenosyl-L-methionine = a 2'-O-methylribonucleotide in rRNA + S-adenosyl-L-homocysteine + H(+). Its function is as follows. Required for proper assembly of pre-ribosomal particles during the biogenesis of the 60S ribosomal subunit. This Yarrowia lipolytica (strain CLIB 122 / E 150) (Yeast) protein is AdoMet-dependent rRNA methyltransferase SPB1.